A 294-amino-acid chain; its full sequence is tRNA pseudouridine synthase B (294 aa).

Catalysis depends on aspartate 38, which acts as the Nucleophile.

This sequence belongs to the pseudouridine synthase TruB family. Type 1 subfamily.

The enzyme catalyses uridine(55) in tRNA = pseudouridine(55) in tRNA. In terms of biological role, responsible for synthesis of pseudouridine from uracil-55 in the psi GC loop of transfer RNAs. The polypeptide is tRNA pseudouridine synthase B (Clostridium perfringens (strain ATCC 13124 / DSM 756 / JCM 1290 / NCIMB 6125 / NCTC 8237 / Type A)).